Consider the following 528-residue polypeptide: Membrane protein insertase YidC (528 aa).

A run of 4 helical transmembrane segments spans residues 5 to 25 (VVIA…IFPP), 346 to 366 (YGIA…PLTH), 416 to 436 (LPMI…MFSI), and 486 to 506 (MLAL…GLVL).

Belongs to the OXA1/ALB3/YidC family. Type 1 subfamily. Interacts with the Sec translocase complex via SecD. Specifically interacts with transmembrane segments of nascent integral membrane proteins during membrane integration.

Its subcellular location is the cell inner membrane. Required for the insertion and/or proper folding and/or complex formation of integral membrane proteins into the membrane. Involved in integration of membrane proteins that insert both dependently and independently of the Sec translocase complex, as well as at least some lipoproteins. Aids folding of multispanning membrane proteins. This chain is Membrane protein insertase YidC, found in Geotalea uraniireducens (strain Rf4) (Geobacter uraniireducens).